We begin with the raw amino-acid sequence, 185 residues long: Dehydrin ERD14 (185 aa).

4 stretches are compositionally biased toward basic and acidic residues: residues 1–13 (MAEEIKNVPEQEV), 25–45 (VTDRGLFDFLGKKKDETKPEE), 52–78 (FEQKVHISEPEPEVKHESLLEKLHRSD), and 103–134 (KPTTEVEVKEEEKKGFMEKLKEKLPGHKKPED). Disordered regions lie at residues 1–138 (MAEE…GSAV) and 166–185 (EKLPGYHPKTTVEEEKKDKE). Residue A2 is modified to N-acetylalanine. S59 carries the post-translational modification Phosphoserine. A run of 2 repeats spans residues 112 to 132 (EEEKKGFMEKLKEKLPGHKKP) and 154 to 174 (PVEKKGILEKIKEKLPGYHPK). The 2 X 21 AA repeats, Lys-rich stretch occupies residues 112–174 (EEEKKGFMEK…KEKLPGYHPK (63 aa)).

The protein belongs to the plant dehydrin family. As to expression, in stems, cauline leaves, roots and flowers. Low levels found in maturing seeds. Absent in dry seeds.

Intrinsically disordered protein acting as a chaperone. Prevents heat-induced aggregation and/or inactivation of various substrates. Binds to acidic phospholipid vesicles without affecting membrane fluidity. In Arabidopsis thaliana (Mouse-ear cress), this protein is Dehydrin ERD14 (ERD14).